The sequence spans 439 residues: Ribosomal protein uS12 methylthiotransferase RimO (439 aa).

In terms of domain architecture, MTTase N-terminal spans 1-117 (MNIGFISLGC…IAGVVNRIAQ (117 aa)). [4Fe-4S] cluster-binding residues include C10, C46, C80, C154, C158, and C161. Residues 140–370 (TTPPGSAYLK…LRLQQKITRQ (231 aa)) form the Radical SAM core domain. The 67-residue stretch at 373 to 439 (LARINTQEKV…RNYDMIGEYQ (67 aa)) folds into the TRAM domain.

The protein belongs to the methylthiotransferase family. RimO subfamily. Requires [4Fe-4S] cluster as cofactor.

It is found in the cytoplasm. It catalyses the reaction L-aspartate(89)-[ribosomal protein uS12]-hydrogen + (sulfur carrier)-SH + AH2 + 2 S-adenosyl-L-methionine = 3-methylsulfanyl-L-aspartate(89)-[ribosomal protein uS12]-hydrogen + (sulfur carrier)-H + 5'-deoxyadenosine + L-methionine + A + S-adenosyl-L-homocysteine + 2 H(+). In terms of biological role, catalyzes the methylthiolation of an aspartic acid residue of ribosomal protein uS12. This Syntrophomonas wolfei subsp. wolfei (strain DSM 2245B / Goettingen) protein is Ribosomal protein uS12 methylthiotransferase RimO.